Consider the following 235-residue polypeptide: Ribonuclease 3 (235 aa).

The RNase III domain maps to 6-131; the sequence is IDQLKKLTGH…LIAVIYLDGG (126 aa). Glu-44 contributes to the Mg(2+) binding site. Asp-48 is a catalytic residue. The Mg(2+) site is built by Asp-117 and Glu-120. Glu-120 is a catalytic residue. The region spanning 156–225 is the DRBM domain; the sequence is DAKTELQEWA…AEKILRREGM (70 aa).

It belongs to the ribonuclease III family. In terms of assembly, homodimer. Requires Mg(2+) as cofactor.

Its subcellular location is the cytoplasm. The enzyme catalyses Endonucleolytic cleavage to 5'-phosphomonoester.. In terms of biological role, digests double-stranded RNA. Involved in the processing of primary rRNA transcript to yield the immediate precursors to the large and small rRNAs (23S and 16S). Processes some mRNAs, and tRNAs when they are encoded in the rRNA operon. Processes pre-crRNA and tracrRNA of type II CRISPR loci if present in the organism. This Bartonella bacilliformis (strain ATCC 35685 / KC583 / Herrer 020/F12,63) protein is Ribonuclease 3.